The primary structure comprises 396 residues: Non-homologous end joining protein Ku (396 aa).

The Ku domain maps to 9–189 (ISFGLVSIPV…DVAVRPQELS (181 aa)). A compositionally biased stretch (low complexity) spans 278–288 (DGDAGPAAAGV). Positions 278–396 (DGDAGPAAAG…SKTPPTRRSA (119 aa)) are disordered. Basic and acidic residues predominate over residues 294–312 (DDKASDDKASDDKASDGRR). The segment covering 315-336 (RTSSVKGASSAPGTRSTARKTP) has biased composition (polar residues). A compositionally biased stretch (low complexity) spans 337 to 396 (SSTRSTAKTNAATKTPPAKTSAAKASAAKTSAAKATSSRTAPKTAPRTPTSKTPPTRRSA).

The protein belongs to the prokaryotic Ku family. In terms of assembly, homodimer. Interacts with LigD.

Its function is as follows. With LigD forms a non-homologous end joining (NHEJ) DNA repair enzyme, which repairs dsDNA breaks with reduced fidelity. Binds linear dsDNA with 5'- and 3'- overhangs but not closed circular dsDNA nor ssDNA. Recruits and stimulates the ligase activity of LigD. The polypeptide is Non-homologous end joining protein Ku (Frankia casuarinae (strain DSM 45818 / CECT 9043 / HFP020203 / CcI3)).